The sequence spans 89 residues: UPF0250 protein Bphy_0213 (89 aa).

It belongs to the UPF0250 family.

The polypeptide is UPF0250 protein Bphy_0213 (Paraburkholderia phymatum (strain DSM 17167 / CIP 108236 / LMG 21445 / STM815) (Burkholderia phymatum)).